Reading from the N-terminus, the 273-residue chain is NAD-dependent protein deacetylase 2 (273 aa).

The region spanning 1 to 273 is the Deacetylase sirtuin-type domain; the sequence is MSNAPLANQS…RCEAALAFLL (273 aa). NAD(+)-binding positions include 26–46 and 104–107; these read GAGCSTNSGIPDYRDSHGNWK and QNVD. The active-site Proton acceptor is the H122. Zn(2+) contacts are provided by C130, C133, C181, and C184. NAD(+)-binding positions include 221–223, 247–249, and C265; these read GSS and NLG.

Belongs to the sirtuin family. Class II subfamily. Requires Zn(2+) as cofactor.

The protein localises to the cytoplasm. It catalyses the reaction N(6)-acetyl-L-lysyl-[protein] + NAD(+) + H2O = 2''-O-acetyl-ADP-D-ribose + nicotinamide + L-lysyl-[protein]. NAD-dependent protein deacetylase which modulates the activities of several enzymes which are inactive in their acetylated form. The polypeptide is NAD-dependent protein deacetylase 2 (Bradyrhizobium diazoefficiens (strain JCM 10833 / BCRC 13528 / IAM 13628 / NBRC 14792 / USDA 110)).